We begin with the raw amino-acid sequence, 150 residues long: Flagellar assembly factor FliW (150 aa).

This sequence belongs to the FliW family. In terms of assembly, interacts with translational regulator CsrA and flagellin(s).

The protein resides in the cytoplasm. In terms of biological role, acts as an anti-CsrA protein, binds CsrA and prevents it from repressing translation of its target genes, one of which is flagellin. Binds to flagellin and participates in the assembly of the flagellum. The chain is Flagellar assembly factor FliW from Leptospira borgpetersenii serovar Hardjo-bovis (strain L550).